We begin with the raw amino-acid sequence, 362 residues long: Protein RecA (362 aa).

65–72 (GPESSGKT) contributes to the ATP binding site. The interval 323–362 (RVANGMEPLNEKSTKETADDKASGKTGENKQETIEEASKE) is disordered. A compositionally biased stretch (basic and acidic residues) spans 331–362 (LNEKSTKETADDKASGKTGENKQETIEEASKE).

Belongs to the RecA family.

It localises to the cytoplasm. Functionally, can catalyze the hydrolysis of ATP in the presence of single-stranded DNA, the ATP-dependent uptake of single-stranded DNA by duplex DNA, and the ATP-dependent hybridization of homologous single-stranded DNAs. It interacts with LexA causing its activation and leading to its autocatalytic cleavage. In Limosilactobacillus reuteri (strain DSM 20016) (Lactobacillus reuteri), this protein is Protein RecA.